Here is a 233-residue protein sequence, read N- to C-terminus: tRNA (guanine-N(7)-)-methyltransferase (233 aa).

S-adenosyl-L-methionine is bound by residues Glu-62, Glu-87, Asp-116, and Asp-138. The active site involves Asp-138. Substrate is bound by residues Lys-142, Asp-174, and 212-215; that span reads TRYE.

The protein belongs to the class I-like SAM-binding methyltransferase superfamily. TrmB family.

It carries out the reaction guanosine(46) in tRNA + S-adenosyl-L-methionine = N(7)-methylguanosine(46) in tRNA + S-adenosyl-L-homocysteine. The protein operates within tRNA modification; N(7)-methylguanine-tRNA biosynthesis. Functionally, catalyzes the formation of N(7)-methylguanine at position 46 (m7G46) in tRNA. The chain is tRNA (guanine-N(7)-)-methyltransferase from Bartonella quintana (strain Toulouse) (Rochalimaea quintana).